Here is a 530-residue protein sequence, read N- to C-terminus: Pancreatic secretory granule membrane major glycoprotein GP2 (530 aa).

Positions 1-21 (MVACDLLWLAAASCLLTLVFP) are cleaved as a signal peptide. A glycan (N-linked (GlcNAc...) asparagine) is linked at Asn33. Cystine bridges form between Cys41–Cys52, Cys56–Cys150, Cys78–Cys168, Cys100–Cys138, Cys106–Cys173, Cys131–Cys139, Cys183–Cys193, Cys187–Cys202, Cys204–Cys234, Cys222–Cys313, and Cys254–Cys277. The D10C stretch occupies residues 54 to 74 (DPCQNHTVLNDPSRSTENTVS). Asn58 and Asn127 each carry an N-linked (GlcNAc...) asparagine glycan. An EGF-like domain is found at 179-223 (APKKCEIACRPEEECVFQNNSWTCVCRQDLNVSDTLSLQPLLDCG). 2 N-linked (GlcNAc...) asparagine glycosylation sites follow: Asn197 and Asn209. A ZP-N region spans residues 221–314 (DCGANEIKVK…FLVNVNFQCA (94 aa)). Residues 221–477 (DCGANEIKVK…PSCSTSRLRS (257 aa)) enclose the ZP domain. N-linked (GlcNAc...) asparagine glycans are attached at residues Asn284 and Asn320. The flexible ZP-N/ZP-C linker stretch occupies residues 315–338 (YPLDMNVSLQTALQPIVSSLNVDV). An internal hydrophobic patch (IHP) region spans residues 339–350 (GGAGEFTVTMAL). Residues 339–477 (GGAGEFTVTM…PSCSTSRLRS (139 aa)) form a ZP-C region. Intrachain disulfides connect Cys394/Cys454, Cys415/Cys470, and Cys459/Cys466. Residues 484-492 (LTRVLDIGP) are external hydrophobic patch (EHP). Residue Asn505 is the site of GPI-anchor amidated asparagine attachment. A propeptide spans 506–530 (GTPRNTGFLLAWPTFFLPVFLAWLF) (removed in mature form).

In terms of assembly, interacts with SYCN. Interacts with bacterial adhesin fimH. N-glycosylated. In terms of tissue distribution, expressed in pancreas.

The protein resides in the zymogen granule membrane. The protein localises to the secreted. Its subcellular location is the cell membrane. It is found in the apical cell membrane. It localises to the membrane raft. The protein resides in the endosome. Functions as an intestinal M-cell transcytotic receptor specific of type-I-piliated bacteria that participates in the mucosal immune response toward these bacteria. At the apical membrane of M-cells it binds fimH, a protein of the bacteria type I pilus tip. Internalizes bound bacteria, like E.coli and S.typhimurium, from the lumen of the intestine and delivers them, through M-cells, to the underlying organized lymphoid follicles where they are captured by antigen-presenting dendritic cells to elicit a mucosal immune response. This chain is Pancreatic secretory granule membrane major glycoprotein GP2, found in Rattus norvegicus (Rat).